The sequence spans 187 residues: Flavin prenyltransferase UbiX (187 aa).

FMN is bound by residues 9 to 11, serine 34, and arginine 123; that span reads GAS. Tyrosine 153 and lysine 169 together coordinate dimethylallyl phosphate.

This sequence belongs to the UbiX/PAD1 family.

It catalyses the reaction dimethylallyl phosphate + FMNH2 = prenylated FMNH2 + phosphate. Flavin prenyltransferase that catalyzes the synthesis of the prenylated FMN cofactor (prenyl-FMN) for 4-hydroxy-3-polyprenylbenzoic acid decarboxylase UbiD. The prenyltransferase is metal-independent and links a dimethylallyl moiety from dimethylallyl monophosphate (DMAP) to the flavin N5 and C6 atoms of FMN. The polypeptide is Flavin prenyltransferase UbiX (Helicobacter pylori (strain J99 / ATCC 700824) (Campylobacter pylori J99)).